A 92-amino-acid chain; its full sequence is Small ribosomal subunit protein uS19 (92 aa).

This sequence belongs to the universal ribosomal protein uS19 family.

Protein S19 forms a complex with S13 that binds strongly to the 16S ribosomal RNA. This Bifidobacterium adolescentis (strain ATCC 15703 / DSM 20083 / NCTC 11814 / E194a) protein is Small ribosomal subunit protein uS19.